The chain runs to 158 residues: Protein OPG060 (158 aa).

It belongs to the orthopoxvirus OPG058 family.

The polypeptide is Protein OPG060 (OPG060) (Cynomys gunnisoni (Gunnison's prairie dog)).